The sequence spans 514 residues: 2-isopropylmalate synthase (514 aa).

The Pyruvate carboxyltransferase domain occupies 4–266 (INVFDTSLRD…KTGLKLSELK (263 aa)). Positions 13, 201, 203, and 237 each coordinate Mn(2+). Positions 390 to 514 (ELTALQVTYG…AKREMAKVES (125 aa)) are regulatory domain.

This sequence belongs to the alpha-IPM synthase/homocitrate synthase family. LeuA type 1 subfamily. In terms of assembly, homodimer. Mn(2+) serves as cofactor.

It localises to the cytoplasm. It carries out the reaction 3-methyl-2-oxobutanoate + acetyl-CoA + H2O = (2S)-2-isopropylmalate + CoA + H(+). Its pathway is amino-acid biosynthesis; L-leucine biosynthesis; L-leucine from 3-methyl-2-oxobutanoate: step 1/4. Catalyzes the condensation of the acetyl group of acetyl-CoA with 3-methyl-2-oxobutanoate (2-ketoisovalerate) to form 3-carboxy-3-hydroxy-4-methylpentanoate (2-isopropylmalate). This is 2-isopropylmalate synthase from Shouchella clausii (strain KSM-K16) (Alkalihalobacillus clausii).